Here is a 765-residue protein sequence, read N- to C-terminus: DNA ligase (765 aa).

Residues 1-34 form a disordered region; the sequence is MAGDDEDRAVPAAEGAPPPSALPPVSGLDVKAAE. NAD(+) contacts are provided by residues 61–65, 110–111, and Glu144; these read DAEYD and SL. The active-site N6-AMP-lysine intermediate is the Lys146. Positions 167, 204, 317, and 341 each coordinate NAD(+). Zn(2+) is bound by residues Cys446, Cys449, Cys464, and Cys470. The region spanning 687–765 is the BRCT domain; it reads ATDSAIAGKT…EDEWLAIAQG (79 aa).

It belongs to the NAD-dependent DNA ligase family. LigA subfamily. The cofactor is Mg(2+). Mn(2+) serves as cofactor.

It carries out the reaction NAD(+) + (deoxyribonucleotide)n-3'-hydroxyl + 5'-phospho-(deoxyribonucleotide)m = (deoxyribonucleotide)n+m + AMP + beta-nicotinamide D-nucleotide.. DNA ligase that catalyzes the formation of phosphodiester linkages between 5'-phosphoryl and 3'-hydroxyl groups in double-stranded DNA using NAD as a coenzyme and as the energy source for the reaction. It is essential for DNA replication and repair of damaged DNA. The chain is DNA ligase from Paracoccus denitrificans (strain Pd 1222).